A 333-amino-acid polypeptide reads, in one-letter code: Autoinducer 2 import system permease protein LsrD (333 aa).

10 helical membrane passes run 7 to 27 (YGWEFALAVLLVMEILLFGIA), 45 to 65 (ICIGIVALPLTMVIVSGGIDI), 70 to 90 (TIGLCAISLGVMNQADIPMAA), 91 to 111 (AIPLTLNVGAMCGIINAALIL), 119 to 139 (VITLGTLYLFGGSALLLSGIF), 162 to 182 (LLGLPVPLAMFIICVLVFWLF), 212 to 232 (TLYFIYSLTGIAAAIAAIVLV), 240 to 260 (SDLGSSFLMPAITAVVLGGAN), 261 to 281 (IYGGSGSIIGTALAMLLIGYL), and 288 to 308 (IGIPNQISSALSGALLIIAVV).

This sequence belongs to the binding-protein-dependent transport system permease family. AraH/RbsC subfamily. In terms of assembly, the complex is composed of two ATP-binding proteins (LsrA), two transmembrane proteins (LsrC and LsrD) and a solute-binding protein (LsrB).

Its subcellular location is the cell inner membrane. Its function is as follows. Part of the ABC transporter complex LsrABCD involved in autoinducer 2 (AI-2) import. Probably responsible for the translocation of the substrate across the membrane. This Photorhabdus temperata protein is Autoinducer 2 import system permease protein LsrD (lsrD).